The chain runs to 308 residues: ADP-L-glycero-D-manno-heptose-6-epimerase (308 aa).

NADP(+)-binding positions include 10 to 11 (MI), 31 to 32 (DN), Lys38, Lys53, 75 to 79 (EGACS), and Asn92. Tyr140 serves as the catalytic Proton acceptor. Lys144 provides a ligand contact to NADP(+). Asn169 contacts substrate. Positions 170 and 178 each coordinate NADP(+). Lys178 serves as the catalytic Proton acceptor. Substrate is bound by residues Ser180, His187, 201 to 204 (FEGS), Arg209, and Tyr272.

This sequence belongs to the NAD(P)-dependent epimerase/dehydratase family. HldD subfamily. As to quaternary structure, homopentamer. Requires NADP(+) as cofactor.

The enzyme catalyses ADP-D-glycero-beta-D-manno-heptose = ADP-L-glycero-beta-D-manno-heptose. Its pathway is nucleotide-sugar biosynthesis; ADP-L-glycero-beta-D-manno-heptose biosynthesis; ADP-L-glycero-beta-D-manno-heptose from D-glycero-beta-D-manno-heptose 7-phosphate: step 4/4. Its function is as follows. Catalyzes the interconversion between ADP-D-glycero-beta-D-manno-heptose and ADP-L-glycero-beta-D-manno-heptose via an epimerization at carbon 6 of the heptose. In Actinobacillus pleuropneumoniae serotype 5b (strain L20), this protein is ADP-L-glycero-D-manno-heptose-6-epimerase.